The sequence spans 248 residues: Ubiquinone/menaquinone biosynthesis C-methyltransferase UbiE (248 aa).

Residues Thr71, Asp92, and 120 to 121 (DA) contribute to the S-adenosyl-L-methionine site.

It belongs to the class I-like SAM-binding methyltransferase superfamily. MenG/UbiE family.

The catalysed reaction is a 2-demethylmenaquinol + S-adenosyl-L-methionine = a menaquinol + S-adenosyl-L-homocysteine + H(+). The enzyme catalyses a 2-methoxy-6-(all-trans-polyprenyl)benzene-1,4-diol + S-adenosyl-L-methionine = a 5-methoxy-2-methyl-3-(all-trans-polyprenyl)benzene-1,4-diol + S-adenosyl-L-homocysteine + H(+). Its pathway is quinol/quinone metabolism; menaquinone biosynthesis; menaquinol from 1,4-dihydroxy-2-naphthoate: step 2/2. It participates in cofactor biosynthesis; ubiquinone biosynthesis. In terms of biological role, methyltransferase required for the conversion of demethylmenaquinol (DMKH2) to menaquinol (MKH2) and the conversion of 2-polyprenyl-6-methoxy-1,4-benzoquinol (DDMQH2) to 2-polyprenyl-3-methyl-6-methoxy-1,4-benzoquinol (DMQH2). The protein is Ubiquinone/menaquinone biosynthesis C-methyltransferase UbiE of Methylococcus capsulatus (strain ATCC 33009 / NCIMB 11132 / Bath).